Consider the following 524-residue polypeptide: MSSFSSEVQRRRTFAIISHPDAGKTTLTEKLLWFGGAIQVAGEVRGRKAARHATSDWMELEKQRGISVTSSVMQFPYREHMINLLDTPGHDDFSEDTYRTLTAVDSAVMVIDSVNGVEAQTIKLLNVCRMRDTPILTFINKLDRESRAPIELLDEIESTLGMQCAPMTWPIGMGKSFRGVYHLYNDTISFFDPHAEKGTAEIIQGLDNPRLDELIGAQADDLRVDVELVRGASNAFDKQAYLDGKQTPVFFGSAINNFGVQSLLDAVVELSPPPLPRNTASRVVEPTEEKFSGFVFKIQANMDPKHRDRIAFLRICSGRFERGMKIKQVATGKTLSVNNAITFMAQDRTTMDEAYSGDIIGIPNHGTVKLGDTFTEGENLKFIGIPSFAPEYFRRARIKNPMKMKQLQIGLKQLAEEGASQLFRPLLSNDLILGAIGLLQFDVVAHRLEHEYGVDVAFENYDCATARWLRGSDADLKAIADKYGFNVALDGNEEYVYLAPNRVNLQMAQERYPDIEFLETREIF.

The tr-type G domain maps to 9-275; it reads QRRRTFAIIS…AVVELSPPPL (267 aa). Residues 18–25, 86–90, and 140–143 contribute to the GTP site; these read SHPDAGKT, DTPGH, and NKLD.

The protein belongs to the TRAFAC class translation factor GTPase superfamily. Classic translation factor GTPase family. PrfC subfamily.

The protein resides in the cytoplasm. Its function is as follows. Increases the formation of ribosomal termination complexes and stimulates activities of RF-1 and RF-2. It binds guanine nucleotides and has strong preference for UGA stop codons. It may interact directly with the ribosome. The stimulation of RF-1 and RF-2 is significantly reduced by GTP and GDP, but not by GMP. The protein is Peptide chain release factor 3 of Methylobacillus flagellatus (strain ATCC 51484 / DSM 6875 / VKM B-1610 / KT).